We begin with the raw amino-acid sequence, 165 residues long: V-type proton ATPase 16 kDa proteolipid subunit (165 aa).

The Lumenal portion of the chain corresponds to 1–10; it reads MSSVFSGDET. A helical transmembrane segment spans residues 11–33; sequence APFFGFLGAASALIFSCMGAAYG. Topologically, residues 34–55 are cytoplasmic; sequence TAKSGVGVASMGVMRPELVMKS. The chain crosses the membrane as a helical span at residues 56–76; sequence IVPVVMAGVLGIYGLIIAVII. Residues 77 to 95 lie on the Lumenal side of the membrane; it reads STGINPKAKPYYLFDGYAH. The helical transmembrane segment at 96 to 117 threads the bilayer; that stretch reads LSSGLACGLAGLAAGMAIGIVG. Residues 118 to 129 lie on the Cytoplasmic side of the membrane; the sequence is DAGVRANAQQPK. Residues 130–155 traverse the membrane as a helical segment; it reads LFVGMILILIFAEALALYGLIVGIIL. Over 156 to 165 the chain is Lumenal; it reads SSRAGQSRAD.

This sequence belongs to the V-ATPase proteolipid subunit family. As to quaternary structure, V-ATPase is a heteromultimeric enzyme composed of a peripheral catalytic V1 complex (main components: subunits A, B, C, D, E, and F) attached to an integral membrane V0 proton pore complex (main component: the proteolipid protein; which is present as a hexamer that forms the proton-conducting pore).

The protein resides in the vacuole membrane. Functionally, proton-conducting pore forming subunit of the membrane integral V0 complex of vacuolar ATPase. V-ATPase is responsible for acidifying a variety of intracellular compartments in eukaryotic cells. The chain is V-type proton ATPase 16 kDa proteolipid subunit (VATP-P1) from Oryza sativa subsp. indica (Rice).